The sequence spans 586 residues: 2-succinyl-5-enolpyruvyl-6-hydroxy-3-cyclohexene-1-carboxylate synthase (586 aa).

The protein belongs to the TPP enzyme family. MenD subfamily. As to quaternary structure, homodimer. Mg(2+) serves as cofactor. The cofactor is Mn(2+). Thiamine diphosphate is required as a cofactor.

It carries out the reaction isochorismate + 2-oxoglutarate + H(+) = 5-enolpyruvoyl-6-hydroxy-2-succinyl-cyclohex-3-ene-1-carboxylate + CO2. Its pathway is quinol/quinone metabolism; 1,4-dihydroxy-2-naphthoate biosynthesis; 1,4-dihydroxy-2-naphthoate from chorismate: step 2/7. It participates in cofactor biosynthesis; phylloquinone biosynthesis. Catalyzes the thiamine diphosphate-dependent decarboxylation of 2-oxoglutarate and the subsequent addition of the resulting succinic semialdehyde-thiamine pyrophosphate anion to isochorismate to yield 2-succinyl-5-enolpyruvyl-6-hydroxy-3-cyclohexene-1-carboxylate (SEPHCHC). In Acaryochloris marina (strain MBIC 11017), this protein is 2-succinyl-5-enolpyruvyl-6-hydroxy-3-cyclohexene-1-carboxylate synthase.